Reading from the N-terminus, the 269-residue chain is Cytochrome c oxidase subunit 3 (269 aa).

The next 7 membrane-spanning stretches (helical) occupy residues 13–33, 46–66, 90–110, 138–160, 167–187, 207–227, and 245–265; these read PFHL…LLVL, NGHY…SFWF, GVIL…WAFF, PLLN…HSII, ALYG…FQGV, FGTG…LVAL, and AGIL…ISIY.

It belongs to the cytochrome c oxidase subunit 3 family. In terms of assembly, component of the cytochrome c oxidase (complex IV, CIV), a multisubunit enzyme composed of a catalytic core of 3 subunits and several supernumerary subunits. The complex exists as a monomer or a dimer and forms supercomplexes (SCs) in the inner mitochondrial membrane with ubiquinol-cytochrome c oxidoreductase (cytochrome b-c1 complex, complex III, CIII).

It localises to the mitochondrion inner membrane. It carries out the reaction 4 Fe(II)-[cytochrome c] + O2 + 8 H(+)(in) = 4 Fe(III)-[cytochrome c] + 2 H2O + 4 H(+)(out). Functionally, component of the cytochrome c oxidase, the last enzyme in the mitochondrial electron transport chain which drives oxidative phosphorylation. The respiratory chain contains 3 multisubunit complexes succinate dehydrogenase (complex II, CII), ubiquinol-cytochrome c oxidoreductase (cytochrome b-c1 complex, complex III, CIII) and cytochrome c oxidase (complex IV, CIV), that cooperate to transfer electrons derived from NADH and succinate to molecular oxygen, creating an electrochemical gradient over the inner membrane that drives transmembrane transport and the ATP synthase. Cytochrome c oxidase is the component of the respiratory chain that catalyzes the reduction of oxygen to water. Electrons originating from reduced cytochrome c in the intermembrane space (IMS) are transferred via the dinuclear copper A center (CU(A)) of subunit 2 and heme A of subunit 1 to the active site in subunit 1, a binuclear center (BNC) formed by heme A3 and copper B (CU(B)). The BNC reduces molecular oxygen to 2 water molecules using 4 electrons from cytochrome c in the IMS and 4 protons from the mitochondrial matrix. In Pyricularia grisea (Crabgrass-specific blast fungus), this protein is Cytochrome c oxidase subunit 3 (COX3).